Here is a 405-residue protein sequence, read N- to C-terminus: MFNYEELFQTHKTPFYLYDFDKIKQAFLNYKEAFKGRKSLICYALKANSNLSILSLLAHLESGADCVSIGEIYRALKAGIKPYRIVFSGVGKSGFEIEQALKLNILFLNVESFMELTTIETIAQSLGIKARISIRINPNIDAKTHPYISTGLKENKFGVGEKEALEMFLWAKKSAFLEPVSVHFHIGSQLSDLEPIIEASQKVAKIAKSLIALGIDLRFFDVGGGIGVSYENEETIKLYDYAQGILNSLQGLDLTIICEPGRSIVAESGELITQVLYEKKAQNKRFVVVDAGMNDFLRPSLYHAKHAIRVITPSKGREISPCDVVGPVCESSDTFLKDAHLPELEPGDKLVIEKVGAYGSSMASQYNSRPKLLELALEDHKIRVIRKREALEDLWRLEEEGLKGV.

N6-(pyridoxal phosphate)lysine is present on lysine 46. Pyridoxal 5'-phosphate contacts are provided by residues glycine 225 and 259 to 262 (EPGR). Substrate contacts are provided by arginine 262, arginine 298, and tyrosine 302. Cysteine 329 acts as the Proton donor in catalysis. Substrate contacts are provided by glutamate 330 and tyrosine 358. Tyrosine 358 contributes to the pyridoxal 5'-phosphate binding site.

This sequence belongs to the Orn/Lys/Arg decarboxylase class-II family. LysA subfamily. In terms of assembly, homodimer. The cofactor is pyridoxal 5'-phosphate.

It catalyses the reaction meso-2,6-diaminopimelate + H(+) = L-lysine + CO2. The protein operates within amino-acid biosynthesis; L-lysine biosynthesis via DAP pathway; L-lysine from DL-2,6-diaminopimelate: step 1/1. Its function is as follows. Specifically catalyzes the decarboxylation of meso-diaminopimelate (meso-DAP) to L-lysine. This chain is Diaminopimelate decarboxylase, found in Helicobacter pylori (strain ATCC 700392 / 26695) (Campylobacter pylori).